Reading from the N-terminus, the 395-residue chain is S-adenosylmethionine synthase (395 aa).

ATP is bound at residue histidine 16. Aspartate 18 serves as a coordination point for Mg(2+). Glutamate 44 contributes to the K(+) binding site. Positions 57 and 100 each coordinate L-methionine. Residues 100–110 (QSPDIAQGVDR) are flexible loop. ATP-binding positions include 167 to 169 (DAK), 233 to 234 (RF), aspartate 242, 248 to 249 (RK), alanine 265, and lysine 269. Aspartate 242 is a binding site for L-methionine. L-methionine is bound at residue lysine 273.

Belongs to the AdoMet synthase family. As to quaternary structure, homotetramer; dimer of dimers. It depends on Mg(2+) as a cofactor. K(+) serves as cofactor.

The protein resides in the cytoplasm. It catalyses the reaction L-methionine + ATP + H2O = S-adenosyl-L-methionine + phosphate + diphosphate. It participates in amino-acid biosynthesis; S-adenosyl-L-methionine biosynthesis; S-adenosyl-L-methionine from L-methionine: step 1/1. Functionally, catalyzes the formation of S-adenosylmethionine (AdoMet) from methionine and ATP. The overall synthetic reaction is composed of two sequential steps, AdoMet formation and the subsequent tripolyphosphate hydrolysis which occurs prior to release of AdoMet from the enzyme. The polypeptide is S-adenosylmethionine synthase (Burkholderia cenocepacia (strain HI2424)).